A 444-amino-acid chain; its full sequence is CRAL-TRIO domain-containing protein C3H8.02 (444 aa).

S40 carries the phosphoserine modification. T43 is subject to Phosphothreonine. S81 is modified (phosphoserine). Residues 171–330 enclose the CRAL-TRIO domain; sequence DDDFVRQLRI…EFGGPNPWRY (160 aa). T418 bears the Phosphothreonine mark.

The protein is CRAL-TRIO domain-containing protein C3H8.02 of Schizosaccharomyces pombe (strain 972 / ATCC 24843) (Fission yeast).